The sequence spans 38 residues: Large ribosomal subunit protein bL36 (38 aa).

This sequence belongs to the bacterial ribosomal protein bL36 family.

The chain is Large ribosomal subunit protein bL36 from Cupriavidus metallidurans (strain ATCC 43123 / DSM 2839 / NBRC 102507 / CH34) (Ralstonia metallidurans).